Consider the following 380-residue polypeptide: Cytochrome b (380 aa).

4 helical membrane passes run phenylalanine 34 to methionine 54, tryptophan 78 to isoleucine 99, tryptophan 114 to leucine 134, and phenylalanine 179 to threonine 199. Histidine 84 and histidine 98 together coordinate heme b. Histidine 183 and histidine 197 together coordinate heme b. Histidine 202 contributes to the a ubiquinone binding site. The next 4 helical transmembrane spans lie at leucine 227–serine 247, leucine 289–histidine 309, leucine 321–serine 341, and phenylalanine 348–proline 368.

This sequence belongs to the cytochrome b family. In terms of assembly, the cytochrome bc1 complex contains 11 subunits: 3 respiratory subunits (MT-CYB, CYC1 and UQCRFS1), 2 core proteins (UQCRC1 and UQCRC2) and 6 low-molecular weight proteins (UQCRH/QCR6, UQCRB/QCR7, UQCRQ/QCR8, UQCR10/QCR9, UQCR11/QCR10 and a cleavage product of UQCRFS1). This cytochrome bc1 complex then forms a dimer. It depends on heme b as a cofactor.

It localises to the mitochondrion inner membrane. In terms of biological role, component of the ubiquinol-cytochrome c reductase complex (complex III or cytochrome b-c1 complex) that is part of the mitochondrial respiratory chain. The b-c1 complex mediates electron transfer from ubiquinol to cytochrome c. Contributes to the generation of a proton gradient across the mitochondrial membrane that is then used for ATP synthesis. In Macronectes halli (Hall's giant petrel), this protein is Cytochrome b (MT-CYB).